A 64-amino-acid polypeptide reads, in one-letter code: Bactridin-2 (64 aa).

One can recognise an LCN-type CS-alpha/beta domain in the interval 1-63 (KDGYLVGNDG…TWNRATNRCG (63 aa)). Cystine bridges form between C11–C62, C15–C37, C23–C43, and C27–C45.

The protein belongs to the long (4 C-C) scorpion toxin superfamily. Sodium channel inhibitor family. Beta subfamily. Expressed by the venom gland.

It is found in the secreted. Shows antibacterial activity against both Gram-positive bacteria (B.subtilis, M.luteus, E.faecalis) and Gram-negative bacteria (P.aeruginosa, Y.enterocolitica, A.calcoaceticus). Modifies membrane sodium permeability on Y.enterocolitica. Is toxic to mice, but is not to crabs. Induces concentration dependent haemolysis in human erythrocytes. Acts by inhibiting the sodium (Nav) currents. In Tityus discrepans (Venezuelan scorpion), this protein is Bactridin-2.